A 555-amino-acid chain; its full sequence is Glutamine--tRNA ligase (555 aa).

Residues 35–45 (PEPNGYLHIGH) carry the 'HIGH' region motif. ATP is bound by residues 36–38 (EPN) and 42–48 (HIGHAKS). Aspartate 68 and tyrosine 213 together coordinate L-glutamine. ATP contacts are provided by residues threonine 232 and 262–263 (RL). The 'KMSKS' region motif lies at 269-273 (ITSKR).

It belongs to the class-I aminoacyl-tRNA synthetase family. Monomer.

Its subcellular location is the cytoplasm. The enzyme catalyses tRNA(Gln) + L-glutamine + ATP = L-glutaminyl-tRNA(Gln) + AMP + diphosphate. The protein is Glutamine--tRNA ligase of Ectopseudomonas mendocina (strain ymp) (Pseudomonas mendocina).